The sequence spans 529 residues: Bifunctional purine biosynthesis protein PurH (529 aa).

Positions 1 to 148 (MNNARPIRRA…KNHKDTTIIV (148 aa)) constitute an MGS-like domain.

Belongs to the PurH family.

It catalyses the reaction (6R)-10-formyltetrahydrofolate + 5-amino-1-(5-phospho-beta-D-ribosyl)imidazole-4-carboxamide = 5-formamido-1-(5-phospho-D-ribosyl)imidazole-4-carboxamide + (6S)-5,6,7,8-tetrahydrofolate. The catalysed reaction is IMP + H2O = 5-formamido-1-(5-phospho-D-ribosyl)imidazole-4-carboxamide. It functions in the pathway purine metabolism; IMP biosynthesis via de novo pathway; 5-formamido-1-(5-phospho-D-ribosyl)imidazole-4-carboxamide from 5-amino-1-(5-phospho-D-ribosyl)imidazole-4-carboxamide (10-formyl THF route): step 1/1. Its pathway is purine metabolism; IMP biosynthesis via de novo pathway; IMP from 5-formamido-1-(5-phospho-D-ribosyl)imidazole-4-carboxamide: step 1/1. This Shewanella pealeana (strain ATCC 700345 / ANG-SQ1) protein is Bifunctional purine biosynthesis protein PurH.